The primary structure comprises 157 residues: Small ribosomal subunit protein uS7 (157 aa).

It belongs to the universal ribosomal protein uS7 family. As to quaternary structure, part of the 30S ribosomal subunit. Contacts proteins S9 and S11.

In terms of biological role, one of the primary rRNA binding proteins, it binds directly to 16S rRNA where it nucleates assembly of the head domain of the 30S subunit. Is located at the subunit interface close to the decoding center, probably blocks exit of the E-site tRNA. In Borrelia turicatae (strain 91E135), this protein is Small ribosomal subunit protein uS7.